A 596-amino-acid chain; its full sequence is Uptake hydrogenase large subunit (596 aa).

Ni(2+) is bound by residues cysteine 75, cysteine 78, cysteine 575, and cysteine 578.

It belongs to the [NiFe]/[NiFeSe] hydrogenase large subunit family. In terms of assembly, heterodimer of a large and a small subunit. Requires Ni(2+) as cofactor.

It localises to the cell membrane. The catalysed reaction is H2 + A = AH2. In terms of biological role, this enzyme recycles the H(2) produced by nitrogenase to increase the production of ATP and to protect nitrogenase against inhibition or damage by O(2) under carbon- or phosphate-limited conditions. The sequence is that of Uptake hydrogenase large subunit (hupB) from Rhizobium leguminosarum bv. viciae.